Consider the following 180-residue polypeptide: NAD(P)H-quinone oxidoreductase subunit I, chloroplastic (180 aa).

4Fe-4S ferredoxin-type domains are found at residues 55-84 (GRIH…VDWR) and 95-124 (LNYS…MTEE). Residues Cys64, Cys67, Cys70, Cys74, Cys104, Cys107, Cys110, and Cys114 each coordinate [4Fe-4S] cluster.

The protein belongs to the complex I 23 kDa subunit family. In terms of assembly, NDH is composed of at least 16 different subunits, 5 of which are encoded in the nucleus. [4Fe-4S] cluster serves as cofactor.

Its subcellular location is the plastid. It is found in the chloroplast thylakoid membrane. It catalyses the reaction a plastoquinone + NADH + (n+1) H(+)(in) = a plastoquinol + NAD(+) + n H(+)(out). The catalysed reaction is a plastoquinone + NADPH + (n+1) H(+)(in) = a plastoquinol + NADP(+) + n H(+)(out). NDH shuttles electrons from NAD(P)H:plastoquinone, via FMN and iron-sulfur (Fe-S) centers, to quinones in the photosynthetic chain and possibly in a chloroplast respiratory chain. The immediate electron acceptor for the enzyme in this species is believed to be plastoquinone. Couples the redox reaction to proton translocation, and thus conserves the redox energy in a proton gradient. The protein is NAD(P)H-quinone oxidoreductase subunit I, chloroplastic of Hordeum vulgare (Barley).